The sequence spans 160 residues: Lymphocyte antigen 96 (160 aa).

The N-terminal stretch at 1-16 (MFPFMLFSTLFSSIFT) is a signal peptide. Cystine bridges form between Cys25–Cys51, Cys37–Cys148, and Cys95–Cys105. N-linked (GlcNAc...) asparagine glycosylation is present at Asn26. Residue Asn114 is glycosylated (N-linked (GlcNAc...) asparagine). Residues 119-123 (FSFQG) form an interaction with lipopolysaccharide region. N-linked (GlcNAc...) asparagine glycosylation is present at Asn150.

As to quaternary structure, heterogeneous homomer formed from homodimers; disulfide-linked. Belongs to the lipopolysaccharide (LPS) receptor, a multi-protein complex containing at least CD14, LY96 and TLR4. Binds to the extracellular domains of TLR2 and TLR4. Ligand binding induces interaction with TLR4 and oligomerization of the complex. In terms of processing, N-glycosylated.

It is found in the secreted. The protein localises to the extracellular space. Functionally, binds bacterial lipopolysaccharide (LPS). Cooperates with TLR4 in the innate immune response to bacterial lipopolysaccharide (LPS), and with TLR2 in the response to cell wall components from Gram-positive and Gram-negative bacteria. Enhances TLR4-dependent activation of NF-kappa-B. Cells expressing both LY96 and TLR4, but not TLR4 alone, respond to LPS. This is Lymphocyte antigen 96 (LY96) from Bos taurus (Bovine).